Reading from the N-terminus, the 927-residue chain is Ribosome-releasing factor 2, mitochondrial (927 aa).

A mitochondrion-targeting transit peptide spans 1 to 57 (MVTAPLLGWVAVRPIPRLSKLNTCKYVSSSLQSYKRSVGSCLGKQQSRDFSYSATLT). The tr-type G domain occupies 64-379 (EKTRNIGIIA…AVNNLLPGPS (316 aa)). Residues 73-80 (AHIDAGKT), 163-167 (DTPGH), and 217-220 (NKLD) contribute to the GTP site.

It belongs to the TRAFAC class translation factor GTPase superfamily. Classic translation factor GTPase family. EF-G/EF-2 subfamily.

Its subcellular location is the mitochondrion. Its function is as follows. Mitochondrial GTPase that mediates the disassembly of ribosomes from messenger RNA at the termination of mitochondrial protein biosynthesis. Not involved in the GTP-dependent ribosomal translocation step during translation elongation. This is Ribosome-releasing factor 2, mitochondrial (mef2) from Talaromyces marneffei (strain ATCC 18224 / CBS 334.59 / QM 7333) (Penicillium marneffei).